An 85-amino-acid chain; its full sequence is High-potential iron-sulfur protein (85 aa).

The [4Fe-4S] cluster site is built by Cys-43, Cys-46, Cys-63, and Cys-77.

The protein belongs to the high-potential iron-sulfur protein (HiPIP) family. Homodimer.

The protein localises to the periplasm. In terms of biological role, specific class of high-redox-potential 4Fe-4S ferredoxins. Functions in anaerobic electron transport in most purple and in some other photosynthetic bacteria and in at least one genus (Paracoccus) of halophilic, denitrifying bacteria. This is High-potential iron-sulfur protein from Allochromatium warmingii (Chromatium warmingii).